The chain runs to 146 residues: Hemoglobin subunit beta-2 (146 aa).

Position 1 is an N-acetylvaline (V1). A Globin domain is found at 2-146 (HLHGDEKAAV…VASALAHKYH (145 aa)). At K17 the chain carries N6-succinyllysine. S44 carries the phosphoserine modification. The residue at position 59 (K59) is an N6-succinyllysine. Residues H63 and H92 each contribute to the heme b site. At R104 the chain carries Asymmetric dimethylarginine. The residue at position 123 (T123) is a Phosphothreonine.

The protein belongs to the globin family. In terms of assembly, heterotetramer of two alpha chains and two beta chains. In terms of tissue distribution, red blood cells.

Involved in oxygen transport from the lung to the various peripheral tissues. The protein is Hemoglobin subunit beta-2 (HBB2) of Tapirus terrestris (Lowland tapir).